The sequence spans 213 residues: MSQKVLPTKINLIQFRRQLRLITVIKRLLENKREVLLLYLRTYASEYEKIYNEVNEEMKKVYESYLQAVASEGISNIEEIALSQKPSLEVSSSIKVIFGVKVPTIKLDKSTIPSKPFSDVETSPYLSESYEEMTEAFNKIIELVELESTIRSLVSELRKTQRLINSIDNYILPFYRGSIKFIKQILEDRQREEFSRLKIIRRILQRRRESGSG.

This sequence belongs to the V-ATPase D subunit family. Has multiple subunits with at least A(3), B(3), C, D, E, F, H, I and proteolipid K(x).

It is found in the cell membrane. Its function is as follows. Component of the A-type ATP synthase that produces ATP from ADP in the presence of a proton gradient across the membrane. This Saccharolobus islandicus (strain Y.N.15.51 / Yellowstone #2) (Sulfolobus islandicus) protein is A-type ATP synthase subunit D.